A 279-amino-acid polypeptide reads, in one-letter code: Fatty acid metabolism regulator protein (279 aa).

An HTH gntR-type domain is found at 6-74; it reads KSPAGFAEKY…HGKPTKVNQF (69 aa). Positions 34-53 form a DNA-binding region, H-T-H motif; that stretch reads ERELSELIGVTRTTLREVLQ.

Homodimer.

It localises to the cytoplasm. Functionally, multifunctional regulator of fatty acid metabolism. The polypeptide is Fatty acid metabolism regulator protein (Vibrio vulnificus (strain CMCP6)).